We begin with the raw amino-acid sequence, 693 residues long: Endoprotease bli (693 aa).

Residues 1 to 20 (MYWQLVRILVLFDCLQKILA) form the signal peptide. A propeptide spans 21-116 (IEHDSICIAD…EQRPRVRRKR (96 aa)) (inhibition peptide). Position 161 (aspartate 161) interacts with Ca(2+). The region spanning 167–482 (QWYLNNGAQG…YGLMDAGALV (316 aa)) is the Peptidase S8 domain. Asparagine 194 is a glycosylation site (N-linked (GlcNAc...) asparagine). Aspartate 201 serves as the catalytic Charge relay system. Residue aspartate 202 coordinates substrate. Ca(2+) is bound by residues aspartate 210, aspartate 222, aspartate 227, and aspartate 229. The tract at residues 215-242 (YDPLASTDINGHDDDPTPQDDGDNKHGT) is disordered. Residue 237-238 (DN) coordinates substrate. Residue histidine 240 is the Charge relay system of the active site. Isoleucine 251, asparagine 254, tyrosine 256, and glycine 258 together coordinate Ca(2+). 2 cysteine pairs are disulfide-bonded: cysteine 257-cysteine 406 and cysteine 349-cysteine 379. Substrate contacts are provided by residues glutamate 282, 299-304 (SWGPED), aspartate 310, and 338-341 (ASGN). Residue aspartate 304 participates in Ca(2+) binding. Aspartate 347 lines the Ca(2+) pocket. Substrate-binding residues include aspartate 352 and tyrosine 354. Glutamate 377 serves as a coordination point for Ca(2+). The Charge relay system role is filled by serine 414. A substrate-binding site is contributed by serine 414. Residues asparagine 433 and asparagine 518 are each glycosylated (N-linked (GlcNAc...) asparagine). The P/Homo B domain maps to 490–628 (TVPEQHICTY…SLLLYGTAEP (139 aa)). Cysteine 497 and cysteine 526 form a disulfide bridge. Residues 629–693 (AQPNDPRHSS…LVSAQPELRV (65 aa)) form a disordered region. Positions 668–681 (DSRDWQPKKVENKK) are enriched in basic and acidic residues.

It belongs to the peptidase S8 family. Furin subfamily. Ca(2+) is required as a cofactor. Post-translationally, N-glycosylated. The inhibition peptide, which plays the role of an intramolecular chaperone, is probably autocatalytically removed in the endoplasmic reticulum (ER) and remains non-covalently bound as a potent autoinhibitor. Probably following transport to the trans Golgi, a second cleavage within the inhibition propeptide results in propeptide dissociation and bli activation.

Its subcellular location is the secreted. It catalyses the reaction Release of mature proteins from their proproteins by cleavage of -Arg-Xaa-Yaa-Arg-|-Zaa- bonds, where Xaa can be any amino acid and Yaa is Arg or Lys. Releases albumin, complement component C3 and von Willebrand factor from their respective precursors.. With respect to regulation, inhibited by the propeptide before the second cleavage. Inhibited by ethylenediaminetetraacetic acid (EDTA), ZnSO(4) and chloroketone DEC-RVKR-CMK. Its function is as follows. Serine endoprotease which cleaves substrates at the RX(K/R)R consensus motif. The protein is Endoprotease bli of Onchocerca volvulus.